Here is a 562-residue protein sequence, read N- to C-terminus: ATP synthase subunit beta, mitochondrial (562 aa).

Low complexity-rich tracts occupy residues 1–13 (MASR…LLRS) and 20–40 (SKSP…SSKS). Disordered regions lie at residues 1-43 (MASR…SRAS) and 58-83 (SAAA…KITD). A mitochondrion-targeting transit peptide spans 1 to 55 (MASRRLLSSLLRSSSRRSVSKSPISNINPKLSSSSPSSKSRASPYGYLLTRAAEY). 237-244 (GGAGVGKT) serves as a coordination point for ATP.

This sequence belongs to the ATPase alpha/beta chains family. As to quaternary structure, F-type ATPases have 2 components, CF(1) - the catalytic core - and CF(0) - the membrane proton channel. CF(1) has five subunits: alpha(3), beta(3), gamma(1), delta(1), epsilon(1). CF(0) has three main subunits: a, b and c.

It is found in the mitochondrion. The protein localises to the mitochondrion inner membrane. The enzyme catalyses ATP + H2O + 4 H(+)(in) = ADP + phosphate + 5 H(+)(out). Its function is as follows. Mitochondrial membrane ATP synthase (F(1)F(0) ATP synthase or Complex V) produces ATP from ADP in the presence of a proton gradient across the membrane which is generated by electron transport complexes of the respiratory chain. F-type ATPases consist of two structural domains, F(1) - containing the extramembraneous catalytic core, and F(0) - containing the membrane proton channel, linked together by a central stalk and a peripheral stalk. During catalysis, ATP synthesis in the catalytic domain of F(1) is coupled via a rotary mechanism of the central stalk subunits to proton translocation. Subunits alpha and beta form the catalytic core in F(1). Rotation of the central stalk against the surrounding alpha(3)beta(3) subunits leads to hydrolysis of ATP in three separate catalytic sites on the beta subunits. The sequence is that of ATP synthase subunit beta, mitochondrial (ATPB) from Hevea brasiliensis (Para rubber tree).